The sequence spans 85 residues: Small ribosomal subunit protein eS27 (85 aa).

The C4-type zinc-finger motif lies at 38-60 (CHGCRTITTVFSHAQNVVICSSC).

The protein belongs to the eukaryotic ribosomal protein eS27 family. Zn(2+) is required as a cofactor.

The polypeptide is Small ribosomal subunit protein eS27 (rps27) (Dictyostelium discoideum (Social amoeba)).